An 86-amino-acid chain; its full sequence is Large ribosomal subunit protein bL27 (86 aa).

The interval 1-26 (MATKKAGGSSRNGRDSAGRRLGVKQS) is disordered.

Belongs to the bacterial ribosomal protein bL27 family.

This Rickettsia canadensis (strain McKiel) protein is Large ribosomal subunit protein bL27.